Here is a 217-residue protein sequence, read N- to C-terminus: Ran-binding protein 1 homolog b (217 aa).

Disordered regions lie at residues M1–P32 and E160–A217. A2 carries the post-translational modification N-acetylalanine. The span at D14 to T26 shows a compositional bias: acidic residues. One can recognise a RanBD1 domain in the interval Q29–E164. Basic and acidic residues predominate over residues L181–A217.

In terms of assembly, interacts with the GTP-bound form of RAN1, RAN2 and RAN3.

The protein resides in the nucleus. It localises to the nuclear pore complex. This chain is Ran-binding protein 1 homolog b (RANBP1B), found in Arabidopsis thaliana (Mouse-ear cress).